Reading from the N-terminus, the 186-residue chain is Alkyl hydroperoxide reductase AhpD (186 aa).

The active-site Proton donor is the cysteine 132. Cysteine 132 and cysteine 135 are disulfide-bonded. The active-site Cysteine sulfenic acid (-SOH) intermediate is cysteine 135.

This sequence belongs to the AhpD family.

It carries out the reaction N(6)-[(R)-dihydrolipoyl]-L-lysyl-[lipoyl-carrier protein] + a hydroperoxide = N(6)-[(R)-lipoyl]-L-lysyl-[lipoyl-carrier protein] + an alcohol + H2O. In terms of biological role, antioxidant protein with alkyl hydroperoxidase activity. Required for the reduction of the AhpC active site cysteine residues and for the regeneration of the AhpC enzyme activity. The polypeptide is Alkyl hydroperoxide reductase AhpD (Anaeromyxobacter sp. (strain K)).